The sequence spans 288 residues: ATP synthase gamma chain (288 aa).

It belongs to the ATPase gamma chain family. F-type ATPases have 2 components, CF(1) - the catalytic core - and CF(0) - the membrane proton channel. CF(1) has five subunits: alpha(3), beta(3), gamma(1), delta(1), epsilon(1). CF(0) has three main subunits: a, b and c.

The protein localises to the cell inner membrane. Produces ATP from ADP in the presence of a proton gradient across the membrane. The gamma chain is believed to be important in regulating ATPase activity and the flow of protons through the CF(0) complex. The chain is ATP synthase gamma chain from Actinobacillus pleuropneumoniae serotype 3 (strain JL03).